The primary structure comprises 491 residues: 3-octaprenyl-4-hydroxybenzoate carboxy-lyase (491 aa).

Asn172 contacts Mn(2+). Prenylated FMN is bound by residues Ile175 to Arg177, Arg189 to Leu191, and Arg194 to Gly195. Glu238 contributes to the Mn(2+) binding site. Asp287 acts as the Proton donor in catalysis.

Belongs to the UbiD family. As to quaternary structure, homohexamer. Requires prenylated FMN as cofactor. Mn(2+) is required as a cofactor.

Its subcellular location is the cell membrane. The enzyme catalyses a 4-hydroxy-3-(all-trans-polyprenyl)benzoate + H(+) = a 2-(all-trans-polyprenyl)phenol + CO2. Its pathway is cofactor biosynthesis; ubiquinone biosynthesis. Its function is as follows. Catalyzes the decarboxylation of 3-octaprenyl-4-hydroxy benzoate to 2-octaprenylphenol, an intermediate step in ubiquinone biosynthesis. The sequence is that of 3-octaprenyl-4-hydroxybenzoate carboxy-lyase from Histophilus somni (strain 2336) (Haemophilus somnus).